A 205-amino-acid polypeptide reads, in one-letter code: High frequency lysogenization protein HflD homolog (205 aa).

This sequence belongs to the HflD family.

Its subcellular location is the cytoplasm. It localises to the cell inner membrane. The chain is High frequency lysogenization protein HflD homolog from Shewanella pealeana (strain ATCC 700345 / ANG-SQ1).